Consider the following 145-residue polypeptide: Flagellar assembly factor FliW (145 aa).

It belongs to the FliW family. As to quaternary structure, interacts with translational regulator CsrA and flagellin(s).

It is found in the cytoplasm. In terms of biological role, acts as an anti-CsrA protein, binds CsrA and prevents it from repressing translation of its target genes, one of which is flagellin. Binds to flagellin and participates in the assembly of the flagellum. The polypeptide is Flagellar assembly factor FliW (Clostridium kluyveri (strain NBRC 12016)).